Here is a 95-residue protein sequence, read N- to C-terminus: Small ribosomal subunit protein uS19 (95 aa).

It belongs to the universal ribosomal protein uS19 family.

Functionally, protein S19 forms a complex with S13 that binds strongly to the 16S ribosomal RNA. The protein is Small ribosomal subunit protein uS19 of Lactobacillus gasseri (strain ATCC 33323 / DSM 20243 / BCRC 14619 / CIP 102991 / JCM 1131 / KCTC 3163 / NCIMB 11718 / NCTC 13722 / AM63).